The chain runs to 883 residues: Glutamate receptor 2 (883 aa).

Residues 1-24 form the signal peptide; the sequence is MQKIMHISVLLSPVLWGLIFGVSS. The Extracellular segment spans residues 25–543; it reads NSIQIGGLFP…GVFSFLDPLA (519 aa). C78 and C330 are disulfide-bonded. Residues N256, N370, N406, and N413 are each glycosylated (N-linked (GlcNAc...) asparagine). L-glutamate is bound by residues P499, T501, and R506. A helical transmembrane segment spans residues 544 to 564; sequence YEIWMCIVFAYIGVSVVLFLV. At 565–591 the chain is on the cytoplasmic side; that stretch reads SRFSPYEWHTEEFEDGRETQSSESTNE. The helical; Pore-forming intramembrane region spans 592 to 607; that stretch reads FGIFNSLWFSLGAFMQ. Residues 608 to 610 lie within the membrane without spanning it; sequence QGC. The S-palmitoyl cysteine moiety is linked to residue C610. Over 611-616 the chain is Cytoplasmic; it reads DISPRS. Residues 617 to 637 form a helical membrane-spanning segment; sequence LSGRIVGGVWWFFTLIIISSY. At 638-812 the chain is on the extracellular side; that stretch reads TANLAAFLTV…EKTSALSLSN (175 aa). 2 residues coordinate L-glutamate: S675 and T676. Position 683 is a phosphoserine; by PKC (S683). S717 carries the post-translational modification Phosphoserine; by PKG. E726 contacts L-glutamate. A disulfide bridge connects residues C739 and C794. A helical membrane pass occupies residues 813 to 833; that stretch reads VAGVFYILVGGLGLAMLVALI. Over 834-883 the chain is Cytoplasmic; that stretch reads EFCYKSRAEAKRMKVAKNAQNINPSSSQNSQNFATYKEGYNVYGIESVKI. C836 is lipidated: S-palmitoyl cysteine. 2 positions are modified to phosphoserine: S860 and S863. Positions 867–877 are required for interaction with IQSEC1; sequence ATYKEGYNVYG. A Phosphotyrosine modification is found at Y876. S880 carries the phosphoserine modification.

This sequence belongs to the glutamate-gated ion channel (TC 1.A.10.1) family. GRIA2 subfamily. In terms of assembly, homotetramer or heterotetramer of pore-forming glutamate receptor subunits. Tetramers may be formed by the dimerization of dimers. May interact with MPP4. Forms a ternary complex with GRIP1 and CSPG4. Interacts with ATAD1 in an ATP-dependent manner. ATAD1-catalyzed ATP hydrolysis disrupts binding to ATAD1 and to GRIP1 and leads to AMPAR complex disassembly. Interacts with GRIP1 and GRIP2. Interacts with NSF via its C-terminus. Isoform 1, but not isoform 3, interacts with PICK1. Interacts with CACNG2. Interacts with GRIA1 and SYNDIG1. Part of a complex containing GRIA2, NSF and NAPA and/or NAPB. Interacts with SNX27 (via PDZ domain); the interaction is required for recycling to the plasma membrane when endocytosed and prevent degradation in lysosomes. Interacts with LRFN1. Found in a complex with GRIA1, GRIA3, GRIA4, CNIH2, CNIH3, CACNG2, CACNG3, CACNG4, CACNG5, CACNG7 and CACNG8. Interacts with CACNG5. Interacts with OLFM2. Interacts with AP4B1, AP4E1 and AP4M1; probably indirect it mediates the somatodendritic localization of GRIA2 in neurons. Forms a complex with GRIP1, NSG1 and STX12; controls the intracellular fate of AMPAR and the endosomal sorting of the GRIA2 subunit toward recycling and membrane targeting. Interacts with IQSEC1; the interaction is required for ARF6 activation. Interacts (heterotetramer form) with CNIH2 and CNIH3; this interaction promotes expression at the plasma membrane and extensively modulates their gating properties by slowing deactivation and desensitization kinetics. In terms of processing, palmitoylated. Depalmitoylated upon L-glutamate stimulation. Cys-610 palmitoylation leads to Golgi retention and decreased cell surface expression. In contrast, Cys-836 palmitoylation does not affect cell surface expression but regulates stimulation-dependent endocytosis. Post-translationally, ubiquitinated by RNF167, leading to its degradation. Phosphorylation at Tyr-876 is required for interaction with IQSEC1 and ARF6 activation, which in turn triggers AMPAR internalization for persistent synaptic depression. In terms of processing, N-glycosylated.

It localises to the cell membrane. Its subcellular location is the postsynaptic cell membrane. The protein resides in the postsynaptic density membrane. The catalysed reaction is Ca(2+)(in) = Ca(2+)(out). It carries out the reaction Na(+)(in) = Na(+)(out). Ionotropic glutamate receptor that functions as a ligand-gated cation channel, gated by L-glutamate and glutamatergic agonists such as alpha-amino-3-hydroxy-5-methyl-4-isoxazolepropionic acid (AMPA), quisqualic acid, and kainic acid. L-glutamate acts as an excitatory neurotransmitter at many synapses in the central nervous system and plays an important role in fast excitatory synaptic transmission. Binding of the excitatory neurotransmitter L-glutamate induces a conformation change, leading to the opening of the cation channel, and thereby converts the chemical signal to an electrical impulse upon entry of monovalent and divalent cations such as sodium and calcium. The receptor then desensitizes rapidly and enters in a transient inactive state, characterized by the presence of bound agonist. In the presence of CACNG4 or CACNG7 or CACNG8, shows resensitization which is characterized by a delayed accumulation of current flux upon continued application of L-glutamate. Through complex formation with NSG1, GRIP1 and STX12 controls the intracellular fate of AMPAR and the endosomal sorting of the GRIA2 subunit toward recycling and membrane targeting. This Homo sapiens (Human) protein is Glutamate receptor 2.